The sequence spans 392 residues: Galactokinase (392 aa).

Residue 37 to 40 coordinates substrate; it reads EHTD. ATP is bound by residues serine 71 and 128-134; that span reads GSGLSSS. Positions 134 and 166 each coordinate Mg(2+). Aspartate 178 functions as the Proton acceptor in the catalytic mechanism. Tyrosine 228 is a substrate binding site.

The protein belongs to the GHMP kinase family. GalK subfamily.

It localises to the cytoplasm. It carries out the reaction alpha-D-galactose + ATP = alpha-D-galactose 1-phosphate + ADP + H(+). Its pathway is carbohydrate metabolism; galactose metabolism. Functionally, catalyzes the transfer of the gamma-phosphate of ATP to D-galactose to form alpha-D-galactose-1-phosphate (Gal-1-P). This Streptococcus pneumoniae (strain ATCC BAA-255 / R6) protein is Galactokinase.